The chain runs to 482 residues: Glycogen synthase (482 aa).

Position 18 (Lys18) interacts with ADP-alpha-D-glucose.

Belongs to the glycosyltransferase 1 family. Bacterial/plant glycogen synthase subfamily.

It carries out the reaction [(1-&gt;4)-alpha-D-glucosyl](n) + ADP-alpha-D-glucose = [(1-&gt;4)-alpha-D-glucosyl](n+1) + ADP + H(+). Its pathway is glycan biosynthesis; glycogen biosynthesis. Its function is as follows. Synthesizes alpha-1,4-glucan chains using ADP-glucose. This chain is Glycogen synthase, found in Rhodopseudomonas palustris (strain HaA2).